Consider the following 87-residue polypeptide: Small ribosomal subunit protein bS18 (87 aa).

Belongs to the bacterial ribosomal protein bS18 family. As to quaternary structure, part of the 30S ribosomal subunit. Forms a tight heterodimer with protein bS6.

Functionally, binds as a heterodimer with protein bS6 to the central domain of the 16S rRNA, where it helps stabilize the platform of the 30S subunit. In Nitratidesulfovibrio vulgaris (strain DSM 19637 / Miyazaki F) (Desulfovibrio vulgaris), this protein is Small ribosomal subunit protein bS18.